The following is a 73-amino-acid chain: Cell division protein ZapB (73 aa).

Positions 3–67 form a coiled coil; that stretch reads LELLSKLETK…WNDKVTGLVG (65 aa).

Belongs to the ZapB family. In terms of assembly, homodimer. The ends of the coiled-coil dimer bind to each other, forming polymers. Interacts with FtsZ.

It is found in the cytoplasm. In terms of biological role, non-essential, abundant cell division factor that is required for proper Z-ring formation. It is recruited early to the divisome by direct interaction with FtsZ, stimulating Z-ring assembly and thereby promoting cell division earlier in the cell cycle. Its recruitment to the Z-ring requires functional FtsA or ZipA. The polypeptide is Cell division protein ZapB (Shewanella sp. (strain ANA-3)).